Reading from the N-terminus, the 33-residue chain is Dermaseptin-J7 (33 aa).

The residue at position 33 (Val33) is a Valine amide.

Expressed by the skin glands.

The protein resides in the secreted. Has antimicrobial activity. This is Dermaseptin-J7 from Phasmahyla jandaia (Jandaia leaf frog).